The primary structure comprises 351 residues: Photosystem II D2 protein (351 aa).

A helical membrane pass occupies residues 39–59; the sequence is TAYLAIGGWLTGTTFVTSWYT. Chlorophyll a is bound at residue histidine 116. Residues 123 to 139 traverse the membrane as a helical segment; the sequence is GFMLRQFELARLIGIRP. The pheophytin a site is built by glutamine 128 and asparagine 141. Residues 151–164 form a helical membrane-spanning segment; it reads VFVSVFLIYPLGQS. Histidine 196 contacts chlorophyll a. Residues 206-226 form a helical membrane-spanning segment; it reads GALLSAIHGVTVENTLYQDGE. The a plastoquinone site is built by histidine 213 and phenylalanine 260. Histidine 213 contributes to the Fe cation binding site. Residue histidine 267 participates in Fe cation binding. A helical transmembrane segment spans residues 277-293; that stretch reads GLWTSSIGIIGLALNLR.

This sequence belongs to the reaction center PufL/M/PsbA/D family. As to quaternary structure, PSII is composed of 1 copy each of membrane proteins PsbA, PsbB, PsbC, PsbD, PsbE, PsbF, PsbH, PsbI, PsbJ, PsbK, PsbL, PsbM, PsbT, PsbX, PsbY, PsbZ, Psb30/Ycf12, peripheral proteins PsbO, CyanoQ (PsbQ), PsbU, PsbV and a large number of cofactors. It forms dimeric complexes. The cofactor is The D1/D2 heterodimer binds P680, chlorophylls that are the primary electron donor of PSII, and subsequent electron acceptors. It shares a non-heme iron and each subunit binds pheophytin, quinone, additional chlorophylls, carotenoids and lipids. There is also a Cl(-1) ion associated with D1 and D2, which is required for oxygen evolution. The PSII complex binds additional chlorophylls, carotenoids and specific lipids..

Its subcellular location is the host cellular thylakoid membrane. The enzyme catalyses 2 a plastoquinone + 4 hnu + 2 H2O = 2 a plastoquinol + O2. Photosystem II (PSII) is a light-driven water:plastoquinone oxidoreductase that uses light energy to abstract electrons from H(2)O, generating O(2) and a proton gradient subsequently used for ATP formation. It consists of a core antenna complex that captures photons, and an electron transfer chain that converts photonic excitation into a charge separation. The D1/D2 (PsbA/PsbD) reaction center heterodimer binds P680, the primary electron donor of PSII as well as several subsequent electron acceptors. D2 is needed for assembly of a stable PSII complex. The chain is Photosystem II D2 protein (psbD) from Synechococcus phage S-RSM2.